The following is a 277-amino-acid chain: N-acetylmuramic acid 6-phosphate etherase (277 aa).

The SIS domain occupies 53-216 (IIPRVKKGGR…STTIMIELGR (164 aa)). Glu81 functions as the Proton donor in the catalytic mechanism. Residue Glu112 is part of the active site.

Belongs to the GCKR-like family. MurNAc-6-P etherase subfamily. As to quaternary structure, homodimer.

It carries out the reaction N-acetyl-D-muramate 6-phosphate + H2O = N-acetyl-D-glucosamine 6-phosphate + (R)-lactate. Its pathway is amino-sugar metabolism; N-acetylmuramate degradation. Functionally, specifically catalyzes the cleavage of the D-lactyl ether substituent of MurNAc 6-phosphate, producing GlcNAc 6-phosphate and D-lactate. The chain is N-acetylmuramic acid 6-phosphate etherase from Bacteroides thetaiotaomicron (strain ATCC 29148 / DSM 2079 / JCM 5827 / CCUG 10774 / NCTC 10582 / VPI-5482 / E50).